A 629-amino-acid polypeptide reads, in one-letter code: Chaperone protein DnaK (629 aa).

T195 is subject to Phosphothreonine; by autocatalysis. 2 disordered regions span residues 514 to 533 and 543 to 629; these read EAEQ…EKRN and LGQL…KPAE. The span at 555–590 shows a compositional bias: basic and acidic residues; that stretch reads DAKDRLKAAADEAEEAVRSDDDSRIERAQKQLEEAM. A compositionally biased stretch (low complexity) spans 595-614; that stretch reads TAAQSGSQNQAGQGAQTQTG. Basic and acidic residues predominate over residues 615–629; the sequence is RQEDDVIDADFKPAE.

It belongs to the heat shock protein 70 family.

Its function is as follows. Acts as a chaperone. The chain is Chaperone protein DnaK from Deinococcus geothermalis (strain DSM 11300 / CIP 105573 / AG-3a).